Consider the following 470-residue polypeptide: FAD-dependent monooxygenase dpchE (470 aa).

An N-terminal signal peptide occupies residues 1–24 (MSEPHFKVIIVGGSITGLTLAHSL). Residues Glu-35, Gly-49, and Arg-108 each coordinate FAD. A glycan (N-linked (GlcNAc...) asparagine) is linked at Asn-128. Arg-193 is an active-site residue. Residues Asp-312 and Ala-325 each contribute to the FAD site. The chain crosses the membrane as a helical span at residues 447 to 463 (WAVVSRSVLLLVGLAIL).

The protein belongs to the paxM FAD-dependent monooxygenase family. FAD serves as cofactor.

It is found in the membrane. Its pathway is secondary metabolite biosynthesis; terpenoid biosynthesis. Functionally, FAD-dependent monooxygenase; part of the gene cluster that mediates the biosynthesis of the diterpenoid pyrones higginsianins A and B. The first step of the pathway is the synthesis of the alpha-pyrone moiety by the polyketide synthase dpchA via condensation of one acetyl-CoA starter unit with 3 malonyl-CoA units and 2 methylations. The alpha-pyrone is then combined with geranylgeranyl pyrophosphate (GGPP) formed by the GGPP synthase dpchD through the action of the prenyltransferase dpchC to yield a linear alpha-pyrone diterpenoid. Subsequent steps in the diterpenoid pyrone biosynthetic pathway involve the decalin core formation, which is initiated by the epoxidation of the C10-C11 olefin by the FAD-dependent oxidoreductase dpchE, and is followed by a cyclization cascade catalyzed by the terpene cyclase dpchB. The short chain dehydrogenase/reductase dpchG then oxidizes the 8S hydroxy group to a ketone and the short chain dehydrogenase/reductase dpchH reduces the ketone to the 8R hydroxy group to yield higginsianin B. Finally, the FAD-dependent oxidoreductase dpchF converts higginsianin B into higginsianin A. The chain is FAD-dependent monooxygenase dpchE from Colletotrichum higginsianum (strain IMI 349063) (Crucifer anthracnose fungus).